A 344-amino-acid polypeptide reads, in one-letter code: S-adenosylmethionine:tRNA ribosyltransferase-isomerase (344 aa).

Belongs to the QueA family. As to quaternary structure, monomer.

Its subcellular location is the cytoplasm. The enzyme catalyses 7-aminomethyl-7-carbaguanosine(34) in tRNA + S-adenosyl-L-methionine = epoxyqueuosine(34) in tRNA + adenine + L-methionine + 2 H(+). Its pathway is tRNA modification; tRNA-queuosine biosynthesis. Its function is as follows. Transfers and isomerizes the ribose moiety from AdoMet to the 7-aminomethyl group of 7-deazaguanine (preQ1-tRNA) to give epoxyqueuosine (oQ-tRNA). The polypeptide is S-adenosylmethionine:tRNA ribosyltransferase-isomerase (Lactiplantibacillus plantarum (strain ATCC BAA-793 / NCIMB 8826 / WCFS1) (Lactobacillus plantarum)).